We begin with the raw amino-acid sequence, 288 residues long: Acetyl-coenzyme A carboxylase carboxyl transferase subunit beta (288 aa).

The CoA carboxyltransferase N-terminal domain maps to 34 to 288 (LFAKCPACKH…HLVAFHGGGQ (255 aa)). Zn(2+) contacts are provided by Cys-38, Cys-41, Cys-56, and Cys-59. The segment at 38–59 (CPACKHMIYKKDLGLAKICPTC) adopts a C4-type zinc-finger fold.

Belongs to the AccD/PCCB family. Acetyl-CoA carboxylase is a heterohexamer composed of biotin carboxyl carrier protein (AccB), biotin carboxylase (AccC) and two subunits each of ACCase subunit alpha (AccA) and ACCase subunit beta (AccD). The cofactor is Zn(2+).

It localises to the cytoplasm. It carries out the reaction N(6)-carboxybiotinyl-L-lysyl-[protein] + acetyl-CoA = N(6)-biotinyl-L-lysyl-[protein] + malonyl-CoA. The protein operates within lipid metabolism; malonyl-CoA biosynthesis; malonyl-CoA from acetyl-CoA: step 1/1. In terms of biological role, component of the acetyl coenzyme A carboxylase (ACC) complex. Biotin carboxylase (BC) catalyzes the carboxylation of biotin on its carrier protein (BCCP) and then the CO(2) group is transferred by the transcarboxylase to acetyl-CoA to form malonyl-CoA. The sequence is that of Acetyl-coenzyme A carboxylase carboxyl transferase subunit beta from Streptococcus pyogenes serotype M3 (strain ATCC BAA-595 / MGAS315).